The primary structure comprises 85 residues: Neurtoxin 10 (85 aa).

The signal sequence occupies residues 1-23 (MKFCVAVSLLIIASMAGVISVSG). Residues 24–85 (YDVYPRDYAE…NFLSVIWKHC (62 aa)) form the LCN-type CS-alpha/beta domain. 3 disulfide bridges follow: Cys-38/Cys-60, Cys-46/Cys-65, and Cys-50/Cys-67.

Belongs to the long (3 C-C) scorpion toxin superfamily. Expressed by the venom gland.

The protein resides in the secreted. This is Neurtoxin 10 from Lychas mucronatus (Chinese swimming scorpion).